The primary structure comprises 350 residues: tRNA dimethylallyltransferase (350 aa).

34-41 lines the ATP pocket; that stretch reads GPTASGKT. Substrate is bound at residue 36 to 41; that stretch reads TASGKT. 3 interaction with substrate tRNA regions span residues 63-66, 187-191, and 274-279; these read DSAL, QRIQR, and RCVGYR.

The protein belongs to the IPP transferase family. Monomer. The cofactor is Mg(2+).

It catalyses the reaction adenosine(37) in tRNA + dimethylallyl diphosphate = N(6)-dimethylallyladenosine(37) in tRNA + diphosphate. Catalyzes the transfer of a dimethylallyl group onto the adenine at position 37 in tRNAs that read codons beginning with uridine, leading to the formation of N6-(dimethylallyl)adenosine (i(6)A). This is tRNA dimethylallyltransferase from Paracidovorax citrulli (strain AAC00-1) (Acidovorax citrulli).